A 351-amino-acid chain; its full sequence is Ion-translocating oxidoreductase complex subunit D (351 aa).

4 helical membrane-spanning segments follow: residues 20–40 (IMLL…YFFG), 44–64 (LIQV…TLSL), 89–109 (LPPL…IIIA), and 123–143 (PAMI…TSWL). The residue at position 187 (T187) is an FMN phosphoryl threonine. Transmembrane regions (helical) follow at residues 215–235 (LSGI…LFLL), 244–264 (IPVS…VIAP), 267–287 (FAPP…FFIA), 301–321 (LIFG…GGYP), and 322–342 (DGVA…DYYT).

The protein belongs to the NqrB/RnfD family. As to quaternary structure, the complex is composed of six subunits: RnfA, RnfB, RnfC, RnfD, RnfE and RnfG. FMN is required as a cofactor.

The protein localises to the cell inner membrane. Functionally, part of a membrane-bound complex that couples electron transfer with translocation of ions across the membrane. The protein is Ion-translocating oxidoreductase complex subunit D of Pectobacterium carotovorum subsp. carotovorum (strain PC1).